The sequence spans 569 residues: Cysteine--tRNA ligase CPS1 homolog, chloroplastic/mitochondrial (569 aa).

Residues Met-1–Tyr-42 constitute a chloroplast and mitochondrion transit peptide. Zn(2+) is bound at residue Cys-99. The 'HIGH' region signature appears at Val-101–His-111. Residues Cys-279, His-304, and Glu-308 each coordinate Zn(2+). Residues Lys-336 to Ser-340 carry the 'KMSKS' region motif. Lys-339 lines the ATP pocket.

It belongs to the class-I aminoacyl-tRNA synthetase family. Requires Zn(2+) as cofactor.

Its subcellular location is the plastid. The protein localises to the chloroplast. The protein resides in the mitochondrion. It catalyses the reaction tRNA(Cys) + L-cysteine + ATP = L-cysteinyl-tRNA(Cys) + AMP + diphosphate. Functionally, nuclear genome-encoded factor required for normal assembly of chloroplast polysomes. The polypeptide is Cysteine--tRNA ligase CPS1 homolog, chloroplastic/mitochondrial (Oryza sativa subsp. japonica (Rice)).